A 243-amino-acid chain; its full sequence is Phomoidride biosynthesis cluster protein B (243 aa).

Belongs to the tstB family.

Phosphatidylethanolamine-binding protein; part of the gene cluster that mediates the biosynthesis of the antihypercholesterolemic agents phomoidrides which are dimeric anhydrides. Within the pathway, tstB is not essential for dimerization and its function has still to be determined. The pathway begins with the highly reducing polyketide synthase tstA that catalyzes the formation of a C12-fatty acyl-ACP, starting from one acetate and 5 malonate units. The hydrolase tstM is involved in the release of the C12-fatty acyl chain from phiA. The alkylcitrate synthase (ACS) tstJ and the alkylcitrate dehydratase (ACDH) tstI then give rise to decarboxylated monomeric anhydrides by coupling the C12-fatty acyl chain with oxalacetic acid. The cyclase tstC is responsible for the dimerization of the monomeric anhydrides which leads to the production of prephomoidride that contains the characteristic bicyclo[4.3.1]deca-1,6-diene system of phomoidrides. Iterative oxidation catalyzed by the alpha-ketoglutarate-dependent dioxygenase tstK produced then phomoidride A. Finally, the methyltransferase tstE converts phomoidride A to phomoidride B via an acetalization reaction. The phosphatidylethanolamine-binding protein tstB and tstN are not essential for dimerization and their functions have still to be determined. The chain is Phomoidride biosynthesis cluster protein B from Talaromyces stipitatus (strain ATCC 10500 / CBS 375.48 / QM 6759 / NRRL 1006) (Penicillium stipitatum).